The following is a 471-amino-acid chain: Glutamate--tRNA ligase (471 aa).

The short motif at 9 to 19 (PSPTGYLHVGG) is the 'HIGH' region element. Zn(2+) is bound by residues cysteine 98, cysteine 100, cysteine 125, and histidine 127. The 'KMSKS' region motif lies at 237 to 241 (KLSKR). An ATP-binding site is contributed by lysine 240.

This sequence belongs to the class-I aminoacyl-tRNA synthetase family. Glutamate--tRNA ligase type 1 subfamily. As to quaternary structure, monomer. Requires Zn(2+) as cofactor.

The protein localises to the cytoplasm. It catalyses the reaction tRNA(Glu) + L-glutamate + ATP = L-glutamyl-tRNA(Glu) + AMP + diphosphate. Catalyzes the attachment of glutamate to tRNA(Glu) in a two-step reaction: glutamate is first activated by ATP to form Glu-AMP and then transferred to the acceptor end of tRNA(Glu). In Shigella dysenteriae serotype 1 (strain Sd197), this protein is Glutamate--tRNA ligase.